We begin with the raw amino-acid sequence, 460 residues long: Methionine aminopeptidase 2-1 (460 aa).

The segment at 1 to 90 (MGSKSPNGED…SAQAAQQTAP (90 aa)) is disordered. Positions 30 to 39 (SAAASGLLRG) are enriched in low complexity. A compositionally biased stretch (acidic residues) spans 42–52 (EDQDEDGDDDE). Residues 69-81 (TKKRRRNNKKKKS) are compositionally biased toward basic residues. Histidine 212 serves as a coordination point for substrate. The a divalent metal cation site is built by aspartate 233, aspartate 244, and histidine 313. Histidine 321 contacts substrate. Positions 346 and 441 each coordinate a divalent metal cation.

The protein belongs to the peptidase M24A family. Methionine aminopeptidase eukaryotic type 2 subfamily. It depends on Co(2+) as a cofactor. Requires Zn(2+) as cofactor. Mn(2+) serves as cofactor. The cofactor is Fe(2+).

The protein resides in the cytoplasm. The enzyme catalyses Release of N-terminal amino acids, preferentially methionine, from peptides and arylamides.. In terms of biological role, cotranslationally removes the N-terminal methionine from nascent proteins. The N-terminal methionine is often cleaved when the second residue in the primary sequence is small and uncharged (Met-Ala-, Cys, Gly, Pro, Ser, Thr, or Val). This chain is Methionine aminopeptidase 2-1, found in Leptosphaeria maculans (strain JN3 / isolate v23.1.3 / race Av1-4-5-6-7-8) (Blackleg fungus).